The chain runs to 459 residues: UDP-N-acetylmuramate--L-alanine ligase (459 aa).

118–124 (GTHGKTT) is an ATP binding site.

It belongs to the MurCDEF family.

The protein resides in the cytoplasm. The catalysed reaction is UDP-N-acetyl-alpha-D-muramate + L-alanine + ATP = UDP-N-acetyl-alpha-D-muramoyl-L-alanine + ADP + phosphate + H(+). It participates in cell wall biogenesis; peptidoglycan biosynthesis. Functionally, cell wall formation. This chain is UDP-N-acetylmuramate--L-alanine ligase, found in Clostridium beijerinckii (strain ATCC 51743 / NCIMB 8052) (Clostridium acetobutylicum).